Here is a 559-residue protein sequence, read N- to C-terminus: Mercuric reductase (559 aa).

In terms of domain architecture, HMA spans 1–64 (MYLNITGMTC…AVAGLGYKAT (64 aa)). A metal cation-binding residues include cysteine 10 and cysteine 13. Alanine 108, glycine 128, and threonine 133 together coordinate FAD. Cysteine 134 and cysteine 139 form a disulfide bridge. FAD is bound by residues lysine 143, alanine 209, aspartate 401, and valine 409. Cysteine 556 and cysteine 557 together coordinate Hg(2+).

This sequence belongs to the class-I pyridine nucleotide-disulfide oxidoreductase family. Homodimer. It depends on FAD as a cofactor.

The enzyme catalyses Hg + NADP(+) + H(+) = Hg(2+) + NADPH. Resistance to Hg(2+) in bacteria appears to be governed by a specialized system which includes mercuric reductase. MerA protein is responsible for volatilizing mercury as Hg(0). In Alcaligenes sp, this protein is Mercuric reductase (merA).